A 113-amino-acid chain; its full sequence is Large ribosomal subunit protein uL22 (113 aa).

The protein belongs to the universal ribosomal protein uL22 family. In terms of assembly, part of the 50S ribosomal subunit.

This protein binds specifically to 23S rRNA; its binding is stimulated by other ribosomal proteins, e.g. L4, L17, and L20. It is important during the early stages of 50S assembly. It makes multiple contacts with different domains of the 23S rRNA in the assembled 50S subunit and ribosome. Its function is as follows. The globular domain of the protein is located near the polypeptide exit tunnel on the outside of the subunit, while an extended beta-hairpin is found that lines the wall of the exit tunnel in the center of the 70S ribosome. The chain is Large ribosomal subunit protein uL22 from Geobacillus sp. (strain WCH70).